A 161-amino-acid chain; its full sequence is MQDAITAVINSSDVQGKYLDTAALEKLKSYFSTGELRVRAATTIAANAAAIVKEAVAKSLLYSDITRPGGNMYTTRRYAACIRDLDYYLRYATYAMLAGDPSILDERVLNGLKETYNSLGVPISATVQAIQAMKEVTASLVGPDAGKEMGVYFDYICSGLS.

Position 71 is an N4-methylasparagine (asparagine 71). (2R,3E)-phycocyanobilin is bound at residue cysteine 81.

This sequence belongs to the phycobiliprotein family. In terms of assembly, heterodimer of an alpha and a beta chain. Contains one covalently linked phycocyanobilin chromophore.

Its subcellular location is the cellular thylakoid membrane. In terms of biological role, light-harvesting photosynthetic bile pigment-protein from the phycobiliprotein complex. Allophycocyanin has a maximum absorption at approximately 650 nanometers. The polypeptide is Allophycocyanin beta chain (apcB) (Mastigocladus laminosus (Fischerella sp.)).